Reading from the N-terminus, the 33-residue chain is pyr operon leader peptide (33 aa).

The polypeptide is pyr operon leader peptide (pyrL) (Salmonella typhi).